Here is a 396-residue protein sequence, read N- to C-terminus: Elongation factor Tu 2 (396 aa).

Residues 10 to 206 (KPHINVGTIG…AMDAHIPQPE (197 aa)) enclose the tr-type G domain. A G1 region spans residues 19-26 (GHVDHGKT). 19–26 (GHVDHGKT) contributes to the GTP binding site. Threonine 26 serves as a coordination point for Mg(2+). Residues 60–64 (GITIA) are G2. Residues 81 to 84 (DCPG) are G3. GTP-binding positions include 81 to 85 (DCPGH) and 136 to 139 (NKAD). Residues 136-139 (NKAD) form a G4 region. The tract at residues 174 to 176 (SAL) is G5.

The protein belongs to the TRAFAC class translation factor GTPase superfamily. Classic translation factor GTPase family. EF-Tu/EF-1A subfamily. In terms of assembly, monomer.

The protein resides in the cytoplasm. It catalyses the reaction GTP + H2O = GDP + phosphate + H(+). GTP hydrolase that promotes the GTP-dependent binding of aminoacyl-tRNA to the A-site of ribosomes during protein biosynthesis. This Halorhodospira halophila (strain DSM 244 / SL1) (Ectothiorhodospira halophila (strain DSM 244 / SL1)) protein is Elongation factor Tu 2.